The primary structure comprises 212 residues: Thymidylate kinase (212 aa).

7 to 14 (GIEGSGKS) provides a ligand contact to ATP.

It belongs to the thymidylate kinase family.

It carries out the reaction dTMP + ATP = dTDP + ADP. Phosphorylation of dTMP to form dTDP in both de novo and salvage pathways of dTTP synthesis. The protein is Thymidylate kinase of Oleidesulfovibrio alaskensis (strain ATCC BAA-1058 / DSM 17464 / G20) (Desulfovibrio alaskensis).